The primary structure comprises 566 residues: Sorting nexin lst-4 (566 aa).

Residues 1 to 61 form the SH3 domain; sequence MAQVKAEYDF…PESYVTPYQA (61 aa). The disordered stretch occupies residues 59–179; the sequence is YQASRPPPVL…DRGSNKVNKN (121 aa). Residues 63–77 are compositionally biased toward pro residues; sequence RPPPVLPPPLPPTSS. The span at 127-140 shows a compositional bias: acidic residues; it reads DDFDDEWTDEDDEQ. The span at 143–154 shows a compositional bias: polar residues; the sequence is TRPNVQSSIGSN. Positions 155–173 are enriched in basic and acidic residues; that stretch reads SRRDLSRSHSEHGGPDRGS. The PX domain occupies 227 to 339; sequence YTCIVDKPKK…HFISCTDEKD (113 aa). The BAR domain maps to 362 to 566; that stretch reads TVPHQPLDPN…KLTSLAARYD (205 aa).

Belongs to the sorting nexin family. Homodimer. Isoform d interacts (via SH3 domain) with dyn-1. In terms of tissue distribution, expressed in vulval precursor cells (VPCs) and apoptotic germ cells. Colocalizes with actin, dyn-1 and rab-5 in early phagosomes.

Its subcellular location is the cytoplasm. The protein resides in the cytoplasmic vesicle. It localises to the phagosome membrane. In terms of biological role, involved in the signaling of vulval development by acting as a negative regulator of epidermal growth factor receptor (EGFR) signaling. Aids in phagosomal membrane tubule formation which is required for phagosomal fusion with endosomes and lysosomes. Also recruits rab-7 to phagosomes by an interaction with dyn-1. These are events leading to phagosome maturation which is a step in apoptotic cell corpse clearance. Binds phosphatidylinositol-3,4,5-trisphosphate. This chain is Sorting nexin lst-4, found in Caenorhabditis elegans.